We begin with the raw amino-acid sequence, 648 residues long: DNA mismatch repair protein MutL (648 aa).

A disordered region spans residues 385–430 (STVKGPAVNEPLTENTLNQQKVKTSASTPVVHTGNSVEPKPETSTA). Residues 396-430 (LTENTLNQQKVKTSASTPVVHTGNSVEPKPETSTA) show a composition bias toward polar residues.

This sequence belongs to the DNA mismatch repair MutL/HexB family.

In terms of biological role, this protein is involved in the repair of mismatches in DNA. It is required for dam-dependent methyl-directed DNA mismatch repair. May act as a 'molecular matchmaker', a protein that promotes the formation of a stable complex between two or more DNA-binding proteins in an ATP-dependent manner without itself being part of a final effector complex. This is DNA mismatch repair protein MutL from Agathobacter rectalis (strain ATCC 33656 / DSM 3377 / JCM 17463 / KCTC 5835 / VPI 0990) (Eubacterium rectale).